The primary structure comprises 155 residues: Microsomal glutathione S-transferase 1 (155 aa).

Residues 3–9 (DLTELMK) lie on the Lumenal side of the membrane. Residues 10–33 (NEVFMAFASYATIVLSKMMFMSTA) traverse the membrane as a helical segment. Topologically, residues 34-62 (TAFYRLTRKVFANPEDCSSFGKGENAKKY) are cytoplasmic. Residue Arg-38 participates in glutathione binding. Residues Lys-42, Lys-55, and Lys-60 each carry the N6-acetyllysine modification. A helical membrane pass occupies residues 63-96 (LRTDERVERVRRAHLNDLENIVPFLGIGLLYSLS). Arg-73, Arg-74, His-76, and Glu-81 together coordinate glutathione. Topologically, residues 97-99 (GPD) are lumenal. The helical transmembrane segment at 100 to 123 (LSTAILHFRLFVGARIYHTIAYLT) threads the bilayer. Tyr-121 is a glutathione binding site. The Cytoplasmic segment spans residues 124–128 (PLPQP). The helical transmembrane segment at 129–148 (NRGLAFFLGYGVTLSMAYRL) threads the bilayer. Residues 149–155 (LKSRLYL) lie on the Lumenal side of the membrane.

The protein belongs to the MAPEG family. As to quaternary structure, homotrimer; The trimer binds only one molecule of glutathione.

It localises to the endoplasmic reticulum membrane. The protein resides in the mitochondrion outer membrane. It carries out the reaction RX + glutathione = an S-substituted glutathione + a halide anion + H(+). Its function is as follows. Conjugation of reduced glutathione to a wide number of exogenous and endogenous hydrophobic electrophiles. The chain is Microsomal glutathione S-transferase 1 (MGST1) from Sus scrofa (Pig).